We begin with the raw amino-acid sequence, 312 residues long: D-alanine--D-alanine ligase (312 aa).

One can recognise an ATP-grasp domain in the interval 108–308; sequence KLVWQQTGIP…YSELVVKVLS (201 aa). 138-193 lines the ATP pocket; it reads VAKLGMPLFVKPASEGSSVAVEKVKSADALPAALEEAAKHDKIVIVEKSIEGGGEY. Asp-262, Glu-275, and Asn-277 together coordinate Mg(2+).

This sequence belongs to the D-alanine--D-alanine ligase family. Mg(2+) serves as cofactor. Requires Mn(2+) as cofactor.

Its subcellular location is the cytoplasm. The catalysed reaction is 2 D-alanine + ATP = D-alanyl-D-alanine + ADP + phosphate + H(+). It functions in the pathway cell wall biogenesis; peptidoglycan biosynthesis. Its function is as follows. Cell wall formation. The protein is D-alanine--D-alanine ligase of Burkholderia thailandensis (strain ATCC 700388 / DSM 13276 / CCUG 48851 / CIP 106301 / E264).